The sequence spans 422 residues: Cytokine receptor-like factor 1 (422 aa).

A signal peptide spans 1–37 (MPAGRRGPAAQSARRPPPLLPLLLLLCVLGAPRAGSG). One can recognise an Ig-like C2-type domain in the interval 38 to 131 (AHTAVISPQD…SILAGSCLYV (94 aa)). Residues asparagine 92, asparagine 104, and asparagine 140 are each glycosylated (N-linked (GlcNAc...) asparagine). Fibronectin type-III domains follow at residues 137–232 (KPVN…ILDV) and 237–341 (PPPD…TPRS). Cysteine 143 and cysteine 153 are joined by a disulfide. Asparagine 168 carries an N-linked (GlcNAc...) asparagine glycan. The cysteines at positions 184 and 195 are disulfide-linked. At serine 219 the chain carries Phosphoserine. Asparagine 292 carries N-linked (GlcNAc...) asparagine glycosylation. The WSXWS motif motif lies at 327 to 331 (WSEWS). The segment at 332–363 (HPTAASTPRSERPGPGGGACEPRGGEPSSGPV) is disordered. A glycan (N-linked (GlcNAc...) asparagine) is linked at asparagine 382. The disordered stretch occupies residues 399 to 422 (HKTRNQDEGILPSGRRGTARGPAR).

Belongs to the type I cytokine receptor family. Type 3 subfamily. In terms of assembly, forms covalent di- and tetramers. Forms a heteromeric complex with cardiotrophin-like cytokine CLCF1/CLC; the CRLF1-CLCF1 complex is a ligand for the ciliary neurotrophic factor receptor/CNTFR. The CRLF1-CLCF1 heterodimer binds SORL1 (via N-terminal ectodomain); within this complex, the interaction is mediated predominantly by the CRLF1 moiety. The tripartite signaling complex formed by CRLF1, CLCF1 and CNTFR also binds SORL1. In terms of tissue distribution, highest levels of expression observed in spleen, thymus, lymph node, appendix, bone marrow, stomach, placenta, heart, thyroid and ovary. Strongly expressed also in fetal lung.

It is found in the secreted. In terms of biological role, in complex with CLCF1, forms a heterodimeric neurotropic cytokine that plays a crucial role during neuronal development. May also play a regulatory role in the immune system. The protein is Cytokine receptor-like factor 1 (CRLF1) of Homo sapiens (Human).